Reading from the N-terminus, the 287-residue chain is GPN-loop GTPase 3 (287 aa).

A GTP-binding site is contributed by 12–17 (GAGKST). The short motif at 69-71 (GPN) is the Gly-Pro-Asn (GPN)-loop; involved in dimer interface element. Residue 172–175 (SKMD) coordinates GTP.

This sequence belongs to the GPN-loop GTPase family. As to quaternary structure, heterodimers with GPN1 or GPN2. Binds to RNA polymerase II (RNAPII).

Functionally, small GTPase required for proper nuclear import of RNA polymerase II and III (RNAPII and RNAPIII). May act at an RNAP assembly step prior to nuclear import. This chain is GPN-loop GTPase 3, found in Cryptococcus neoformans var. neoformans serotype D (strain B-3501A) (Filobasidiella neoformans).